Here is a 931-residue protein sequence, read N- to C-terminus: Netrin receptor UNC5C (931 aa).

Positions 1 to 40 (MRKGLRATAARCGLGLGYLLQMLVLPALALLSASGTGSAA) are cleaved as a signal peptide. Topologically, residues 41 to 380 (QDDEFFHELP…APDSDDVALY (340 aa)) are extracellular. Positions 62 to 159 (PHFLIEPEEA…AGTTKSRKAY (98 aa)) constitute an Ig-like domain. 9 disulfide bridges follow: Cys83–Cys144, Cys95–Cys142, Cys188–Cys239, Cys272–Cys309, Cys276–Cys313, Cys287–Cys299, Cys328–Cys362, Cys332–Cys367, and Cys340–Cys352. The region spanning 161-256 (RIAYLRKTFE…KRKSTTATVI (96 aa)) is the Ig-like C2-type domain. An N-linked (GlcNAc...) asparagine glycan is attached at Asn236. TSP type-1 domains follow at residues 260 to 314 (NGGW…TLCP) and 316 to 368 (DGRW…GLCM). Asn361 carries N-linked (GlcNAc...) asparagine glycosylation. The helical transmembrane segment at 381 to 401 (VGIVIAVTVCLAITVVVALFV) threads the bilayer. The Cytoplasmic segment spans residues 402 to 931 (YRKNHRDFES…VVSLAAEGQY (530 aa)). Residues 402–931 (YRKNHRDFES…VVSLAAEGQY (530 aa)) form a required for netrin-mediated axon repulsion of neuronal growth cones region. Ser502 carries the post-translational modification Phosphoserine. One can recognise a ZU5 domain in the interval 530–673 (CTAFGTFNSL…LSTYALVGQS (144 aa)). Tyr568 carries the post-translational modification Phosphotyrosine. The segment at 694–712 (SLEYSIRVYCLDDTQDALK) is interaction with DCC. Residues 850 to 929 (QKLCSSLDAP…ETVVSLAAEG (80 aa)) form the Death domain.

It belongs to the unc-5 family. In terms of assembly, interacts with DCC (via cytoplasmic domain). Interacts (tyrosine phosphorylated form) with PTPN11. Interacts (via extracellular domain) with FLRT3 (via extracellular domain). Interacts (via Ig-like C2-type domain) with DSCAM (via extracellular domain). Interacts (via death domain) with DAPK1. Interacts (via cytoplasmic domain) with TUBB3; this interaction is decreased by NTN1/Netrin-1. In terms of processing, phosphorylated on different cytoplasmic tyrosine residues. Phosphorylation of Tyr-568 leads to an interaction with PTPN11 phosphatase, suggesting that its activity is regulated by phosphorylation/dephosphorylation. Tyrosine phosphorylation is netrin-dependent. Proteolytically cleaved by caspases during apoptosis. The cleavage does not take place when the receptor is associated with netrin ligand. Its cleavage by caspases is required to induce apoptosis. In terms of tissue distribution, expressed in cortical and cerebellar neurons, including cells of the external and internal granular layer and of the Purkinje cell layer (at protein level). Mainly expressed in regions of differentiating neurons. Highly expressed in brain and lung. Expressed in the cerebellum and the neurons of the hippocampus, with enrichment in neurons of the CA3 hippocampal pyramidal layer. Weakly expressed in testis, ovary, spleen, thymus and bladder. Expressed at very low level in kidney, intestine and salivary gland.

It localises to the cell membrane. It is found in the cell surface. Its subcellular location is the synapse. The protein resides in the synaptosome. The protein localises to the cell projection. It localises to the dendrite. It is found in the axon. Its subcellular location is the growth cone. The protein resides in the lamellipodium. The protein localises to the filopodium. Functionally, receptor for netrin required for axon guidance. Mediates axon repulsion of neuronal growth cones in the developing nervous system upon ligand binding. NTN1/Netrin-1 binding might cause dissociation of UNC5C from polymerized TUBB3 in microtubules and thereby lead to increased microtubule dynamics and axon repulsion. Axon repulsion in growth cones may also be caused by its association with DCC that may trigger signaling for repulsion. Might also collaborate with DSCAM in NTN1-mediated axon repulsion independently of DCC. Also involved in corticospinal tract axon guidance independently of DCC. Involved in dorsal root ganglion axon projection towards the spinal cord. It also acts as a dependence receptor required for apoptosis induction when not associated with netrin ligand. The protein is Netrin receptor UNC5C (Unc5c) of Mus musculus (Mouse).